Consider the following 857-residue polypeptide: MSDLSAHTPMMQQYWKLKNQHPDQLMFYRMGDFYEIFYEDAKKAAKLLDITLTARGQSAGQSIPMCGIPFHSLEGYLAKLVKLGESVVICEQIGDPATSKGPVERQVVRIITPGTVSDEALLDERRDNLIAALLGDERLFGLAVLDITSGNFSVQEIKGWENLLAELERLNPVELLIPDDWPRDLPAEKRPGARRRAPWDFDRDSARKALCQQFATKDLKGFGCDKLTLAIGAAGCLLTYAKETQRTALPHLRSLRHERLDDTVILDGASRRNLELDINLAGGRDNTLQSVIDRCQTAMASRLLSRWLNRPLRDLKVLQARQDSIRCLLDSYRFEKLQPQLKEIGDIERILARIGLRNARPRDLARLRDALGALPELQNAMTELEAPHLARLAAITGTYPELASLLERAIIDNPPAVIRDGGVLKAGYDNELDELLAISENAGQFLIDLEAREKARTGLANLKVGYNRVHGYFIELPTKQAEQAPGDYIRRQTLKGAERFITPELKAFEDKALSAKSRALAREKMLYDALLETLISHLAPLQDSAAALAELDVLSNLAERALNLDLNCPRFVDEPCLRIEQGRHPVVEQVLTTPFVANDLGLDNSTRMLIITGPNMGGKSTYMRQTALIVLLAHIGSFVPAASCELSLVDRIFTRIGSSDDLAGGRSTFMVEMSETANILHNATDRSLVLMDEVGRGTSTFDGLSLAWAAAERLAQLRAYTLFATHYFELTVLPESEPLVANVHLNATEHNERIVFLHHVLPGPASQSYGLAVAQLAGVPTAVIQRAREHLGRLETTSLPHEQPAAHKAKDAPQVPHQSDLFASLPHPAIEKLGKLQLDDMTPRQAIEMLYQLKNLL.

613–620 lines the ATP pocket; it reads GPNMGGKS. Residues 797 to 820 are disordered; the sequence is TSLPHEQPAAHKAKDAPQVPHQSD.

Belongs to the DNA mismatch repair MutS family.

This protein is involved in the repair of mismatches in DNA. It is possible that it carries out the mismatch recognition step. This protein has a weak ATPase activity. This Pseudomonas putida (strain ATCC 47054 / DSM 6125 / CFBP 8728 / NCIMB 11950 / KT2440) protein is DNA mismatch repair protein MutS.